Reading from the N-terminus, the 331-residue chain is 6-phosphogluconolactonase (331 aa).

Lys287 carries the N6-acetyllysine modification.

It belongs to the cycloisomerase 2 family.

The enzyme catalyses 6-phospho-D-glucono-1,5-lactone + H2O = 6-phospho-D-gluconate + H(+). It participates in carbohydrate degradation; pentose phosphate pathway; D-ribulose 5-phosphate from D-glucose 6-phosphate (oxidative stage): step 2/3. Catalyzes the hydrolysis of 6-phosphogluconolactone to 6-phosphogluconate. This Escherichia coli O7:K1 (strain IAI39 / ExPEC) protein is 6-phosphogluconolactonase.